The sequence spans 639 residues: Developmental regulatory protein wetA (639 aa).

4 disordered regions span residues 65–97 (MDPSHHHHHPHHHAHGESSTTSSGVSNADEFDF), 206–369 (TTMR…SAAS), 418–552 (GLLI…SADE), and 587–613 (LMTGVAPSGSSKTKARREKEAQERRRR). The segment covering 69–78 (HHHHHPHHHA) has biased composition (basic residues). Composition is skewed to polar residues over residues 81 to 90 (ESSTTSSGVS) and 214 to 226 (VSQTLQRAVSPSM). Residues 246 to 255 (RGRRAHRAHT) are compositionally biased toward basic residues. Low complexity-rich tracts occupy residues 256–275 (QHALQHQQQQHQHQQQQAHQ), 346–369 (QQQWQQQQQQQHNGAQQHQWSAAS), and 506–526 (HSSGGSAASSSQRSASGRVSV).

This sequence belongs to the wetA family.

In terms of biological role, brlA, abaA and wetA are pivotal regulators of conidiophore development and conidium maturation. They act individually and together to regulate their own expression and that of numerous other sporulation-specific genes. Acts as a crucial regulator of both conidiation capacity and conidial quality. Plays a role in virulence. This chain is Developmental regulatory protein wetA, found in Beauveria bassiana (strain ARSEF 2860) (White muscardine disease fungus).